The following is a 565-amino-acid chain: Oxygen-dependent choline dehydrogenase (565 aa).

Position 7 to 36 (7 to 36) interacts with FAD; the sequence is DYIICGAGSAGNVLATRLTEDPDVTVLLLE. Residue H474 is the Proton acceptor of the active site.

Belongs to the GMC oxidoreductase family. FAD serves as cofactor.

It carries out the reaction choline + A = betaine aldehyde + AH2. It catalyses the reaction betaine aldehyde + NAD(+) + H2O = glycine betaine + NADH + 2 H(+). Its pathway is amine and polyamine biosynthesis; betaine biosynthesis via choline pathway; betaine aldehyde from choline (cytochrome c reductase route): step 1/1. Involved in the biosynthesis of the osmoprotectant glycine betaine. Catalyzes the oxidation of choline to betaine aldehyde and betaine aldehyde to glycine betaine at the same rate. This is Oxygen-dependent choline dehydrogenase from Burkholderia thailandensis (strain ATCC 700388 / DSM 13276 / CCUG 48851 / CIP 106301 / E264).